The sequence spans 197 residues: Nucleoid occlusion factor SlmA (197 aa).

In terms of domain architecture, HTH tetR-type spans 7–67; sequence INRREHILQC…GLIEFIEESL (61 aa). A DNA-binding region (H-T-H motif) is located at residues 30-49; the sequence is TTAKLASEVGVSEAALYRHF. A coiled-coil region spans residues 109–136; sequence DALLGENERLRSRISNLFAKIETQLKQI.

The protein belongs to the nucleoid occlusion factor SlmA family. As to quaternary structure, homodimer. Interacts with FtsZ.

It localises to the cytoplasm. The protein resides in the nucleoid. Its function is as follows. Required for nucleoid occlusion (NO) phenomenon, which prevents Z-ring formation and cell division over the nucleoid. Acts as a DNA-associated cell division inhibitor that binds simultaneously chromosomal DNA and FtsZ, and disrupts the assembly of FtsZ polymers. SlmA-DNA-binding sequences (SBS) are dispersed on non-Ter regions of the chromosome, preventing FtsZ polymerization at these regions. The chain is Nucleoid occlusion factor SlmA from Shewanella baltica (strain OS223).